The sequence spans 92 residues: Small ribosomal subunit protein uS19c (92 aa).

The protein belongs to the universal ribosomal protein uS19 family.

Its subcellular location is the plastid. It is found in the chloroplast. Functionally, protein S19 forms a complex with S13 that binds strongly to the 16S ribosomal RNA. This is Small ribosomal subunit protein uS19c from Nephroselmis olivacea (Green alga).